We begin with the raw amino-acid sequence, 99 residues long: Large ribosomal subunit protein uL23 (99 aa).

This sequence belongs to the universal ribosomal protein uL23 family. As to quaternary structure, part of the 50S ribosomal subunit. Contacts protein L29, and trigger factor when it is bound to the ribosome.

In terms of biological role, one of the early assembly proteins it binds 23S rRNA. One of the proteins that surrounds the polypeptide exit tunnel on the outside of the ribosome. Forms the main docking site for trigger factor binding to the ribosome. This is Large ribosomal subunit protein uL23 from Haemophilus influenzae (strain 86-028NP).